The primary structure comprises 85 residues: Large ribosomal subunit protein bL27 (85 aa).

The tract at residues 1 to 20 is disordered; sequence MAHKKAGGSTRNGRDSEAKR.

This sequence belongs to the bacterial ribosomal protein bL27 family.

This chain is Large ribosomal subunit protein bL27, found in Proteus mirabilis (strain HI4320).